We begin with the raw amino-acid sequence, 339 residues long: Sphingomyelinase D (339 aa).

Positions Met-1 to Gly-21 are cleaved as a signal peptide. His-60 is an active-site residue. 3 residues coordinate Mg(2+): Glu-80, Asp-82, and Asp-128. Residues Ala-309–Trp-316 carry the SMD-tail motif. The disordered stretch occupies residues Asp-313–His-339. The span at Ser-317–Ser-328 shows a compositional bias: low complexity.

Belongs to the sphingomyelinase D/phospholipase D family. Mg(2+) serves as cofactor.

The protein resides in the secreted. It carries out the reaction a sphingomyelin + H2O = an N-acylsphing-4-enine 1-phosphate + choline + H(+). Its function is as follows. Catalyzes the hydrolysis of sphingomyelin. Sphingomyelinases D are produced by some spider in their venoms, but also by arthropods such as ticks, or pathogenic bacteria and fungi. They might play a role in pathogenicity through different mechanisms, such as membrane destabilization and host cell penetration, but also pulmonary inflammation and cutaneous lesions. The protein is Sphingomyelinase D of Arthroderma benhamiae (strain ATCC MYA-4681 / CBS 112371) (Trichophyton mentagrophytes).